A 431-amino-acid chain; its full sequence is Histidinol dehydrogenase (431 aa).

3 residues coordinate NAD(+): Y131, Q193, and N216. S239, Q261, and H264 together coordinate substrate. Q261 and H264 together coordinate Zn(2+). Residues E329 and H330 each act as proton acceptor in the active site. Residues H330, D363, E417, and H422 each contribute to the substrate site. Residue D363 coordinates Zn(2+). H422 is a Zn(2+) binding site.

It belongs to the histidinol dehydrogenase family. Zn(2+) serves as cofactor.

It carries out the reaction L-histidinol + 2 NAD(+) + H2O = L-histidine + 2 NADH + 3 H(+). It participates in amino-acid biosynthesis; L-histidine biosynthesis; L-histidine from 5-phospho-alpha-D-ribose 1-diphosphate: step 9/9. Its function is as follows. Catalyzes the sequential NAD-dependent oxidations of L-histidinol to L-histidinaldehyde and then to L-histidine. In Clostridium acetobutylicum (strain ATCC 824 / DSM 792 / JCM 1419 / IAM 19013 / LMG 5710 / NBRC 13948 / NRRL B-527 / VKM B-1787 / 2291 / W), this protein is Histidinol dehydrogenase.